Reading from the N-terminus, the 521-residue chain is Probable glycine dehydrogenase (decarboxylating) subunit 2 (521 aa).

The residue at position 279 (Lys279) is an N6-(pyridoxal phosphate)lysine.

This sequence belongs to the GcvP family. C-terminal subunit subfamily. In terms of assembly, the glycine cleavage system is composed of four proteins: P, T, L and H. In this organism, the P 'protein' is a heterodimer of two subunits. Pyridoxal 5'-phosphate serves as cofactor.

The catalysed reaction is N(6)-[(R)-lipoyl]-L-lysyl-[glycine-cleavage complex H protein] + glycine + H(+) = N(6)-[(R)-S(8)-aminomethyldihydrolipoyl]-L-lysyl-[glycine-cleavage complex H protein] + CO2. Functionally, the glycine cleavage system catalyzes the degradation of glycine. The P protein binds the alpha-amino group of glycine through its pyridoxal phosphate cofactor; CO(2) is released and the remaining methylamine moiety is then transferred to the lipoamide cofactor of the H protein. In Staphylothermus marinus (strain ATCC 43588 / DSM 3639 / JCM 9404 / F1), this protein is Probable glycine dehydrogenase (decarboxylating) subunit 2.